A 505-amino-acid chain; its full sequence is Lysine--tRNA ligase, heat inducible (505 aa).

Residues K114 and K156 each carry the N6-acetyllysine modification. Residues E415 and E422 each coordinate Mg(2+).

It belongs to the class-II aminoacyl-tRNA synthetase family. Homodimer. Mg(2+) serves as cofactor.

It localises to the cytoplasm. The catalysed reaction is tRNA(Lys) + L-lysine + ATP = L-lysyl-tRNA(Lys) + AMP + diphosphate. The polypeptide is Lysine--tRNA ligase, heat inducible (lysU) (Escherichia coli O6:H1 (strain CFT073 / ATCC 700928 / UPEC)).